Here is a 77-residue protein sequence, read N- to C-terminus: MAKLSCSYLLVFMLVFSAILMVEKVEGEECRLTIDKATPCHLSDCRLSCYTGYNGVGECFDDPNVPGPDNCGCRYNC.

The first 27 residues, 1 to 27 (MAKLSCSYLLVFMLVFSAILMVEKVEG), serve as a signal peptide directing secretion. 4 disulfides stabilise this stretch: Cys30–Cys77, Cys40–Cys59, Cys45–Cys71, and Cys49–Cys73.

Belongs to the DEFL family.

Its subcellular location is the secreted. The sequence is that of Defensin-like protein 161 (LCR27) from Arabidopsis thaliana (Mouse-ear cress).